Consider the following 1416-residue polypeptide: Phospholipid-transporting ATPase VD (1416 aa).

The Cytoplasmic segment spans residues 1–97; sequence MTELLQWARH…PRNLFEQFHR (97 aa). A helical transmembrane segment spans residues 98–118; the sequence is AANLYFLFLVVLNWVPLVEAF. The Exoplasmic loop portion of the chain corresponds to 119 to 120; sequence QK. A helical transmembrane segment spans residues 121 to 141; the sequence is EITMLPLVVVLTIIAIKDGLE. The Cytoplasmic segment spans residues 142 to 321; sequence DYRKYKIDKQ…SKLERRANTD (180 aa). A helical membrane pass occupies residues 322 to 342; that stretch reads VLWCVLLLIVMCLTGALGHGI. Residues 343 to 365 are Exoplasmic loop-facing; the sequence is WLSRYENMLFFNIPEPDGRVISP. A helical transmembrane segment spans residues 366–386; it reads VLTGFYVFWTMIILLQVLIPI. The Cytoplasmic portion of the chain corresponds to 387–1110; sequence SLYVSIEIVK…HWCYTRLSNM (724 aa). Asp-438 functions as the 4-aspartylphosphate intermediate in the catalytic mechanism. 3 residues coordinate ATP: Asp-438, Lys-439, and Thr-440. Residue Asp-438 coordinates Mg(2+). A Mg(2+)-binding site is contributed by Thr-440. The segment at 498-544 is disordered; sequence AQGCRTVPSGPLGKPSAQLSGSTSAVGNGEGSGEVPHSRQAAFSSPM. Residues 514–523 show a composition bias toward polar residues; sequence AQLSGSTSAV. Residues Glu-729, Phe-771, Lys-795, Arg-838, Thr-918, Gly-919, and Asp-920 each contribute to the ATP site. Positions 971–990 are disordered; that stretch reads PELASSRKNFPQPSDAQGQG. Positions 976–987 are enriched in polar residues; sequence SRKNFPQPSDAQ. ATP-binding positions include 993 to 1000, Arg-1027, and Lys-1033; that span reads GLVITGKT. Mg(2+) is bound at residue Asp-1053. ATP-binding residues include Asn-1056 and Asp-1057. A Mg(2+)-binding site is contributed by Asp-1057. The chain crosses the membrane as a helical span at residues 1111-1131; sequence ILYFFYKNVAYVNLLFWYQFF. At 1132 to 1142 the chain is on the exoplasmic loop side; it reads CGFSGTSMTDY. Residues 1143 to 1163 traverse the membrane as a helical segment; it reads WVLIFFNLLFTSVPPIIYGVL. Residues 1164–1192 are Cytoplasmic-facing; sequence EKDVSAETLLQLPELYRSGQRSEEYLPLT. The helical transmembrane segment at 1193 to 1213 threads the bilayer; it reads FWITLLDAFYQSLVCFFVPYF. The Exoplasmic loop portion of the chain corresponds to 1214–1221; it reads TYQGSDID. The helical transmembrane segment at 1222–1242 threads the bilayer; it reads IFTFGNPLNTAALFIILLHLV. Residues 1243 to 1252 are Cytoplasmic-facing; it reads IESKSLTWIH. A helical transmembrane segment spans residues 1253-1273; the sequence is MLVTVGSILSYFFFALAFGAL. Residues 1274–1289 are Exoplasmic loop-facing; it reads CVTCNPPSNPYGIMRK. The chain crosses the membrane as a helical span at residues 1290-1310; sequence HMLDPVFYLVCVLTTFVALLP. The Cytoplasmic portion of the chain corresponds to 1311-1416; sequence RFLYRVLQGS…ASKMTGSSAS (106 aa). A disordered region spans residues 1358-1416; sequence SKHASQSAAMSGRPTPGSSAVLAMKSATVSTVEQSTRETALDRGCSEPGASKMTGSSAS. An ATP-binding site is contributed by 1361–1368; that stretch reads ASQSAAMS. Residues 1392–1402 are compositionally biased toward basic and acidic residues; the sequence is STRETALDRGC.

It belongs to the cation transport ATPase (P-type) (TC 3.A.3) family. Type IV subfamily. Component of a P4-ATPase flippase complex which consists of a catalytic alpha subunit ATP10A and an accessory beta subunit TMEM30A. It depends on Mg(2+) as a cofactor. In terms of processing, autophosphorylated at the conserved aspartate of the P-type ATPase signature sequence. As to expression, expressed at low amounts in liver, brain, testes, and kidney (at protein level). Expressed in placenta.

The protein resides in the cell membrane. Its subcellular location is the endoplasmic reticulum membrane. The catalysed reaction is ATP + H2O + phospholipidSide 1 = ADP + phosphate + phospholipidSide 2.. It carries out the reaction a beta-D-glucosyl-(1&lt;-&gt;1')-N-acylsphing-4-enine(out) + ATP + H2O = a beta-D-glucosyl-(1&lt;-&gt;1')-N-acylsphing-4-enine(in) + ADP + phosphate + H(+). Its function is as follows. Catalytic component of a P4-ATPase flippase complex, which catalyzes the hydrolysis of ATP coupled to the transport of glucosylceramide (GlcCer) from the outer to the inner leaflet of the plasma membrane. This chain is Phospholipid-transporting ATPase VD (Atp10d), found in Mus musculus (Mouse).